The primary structure comprises 319 residues: Beta-ketoacyl-[acyl-carrier-protein] synthase III (319 aa).

Catalysis depends on residues C113 and H246. Residues 247 to 251 (QANLR) form an ACP-binding region. N276 is an active-site residue.

Belongs to the thiolase-like superfamily. FabH family. In terms of assembly, homodimer.

Its subcellular location is the cytoplasm. It catalyses the reaction malonyl-[ACP] + acetyl-CoA + H(+) = 3-oxobutanoyl-[ACP] + CO2 + CoA. Its pathway is lipid metabolism; fatty acid biosynthesis. In terms of biological role, catalyzes the condensation reaction of fatty acid synthesis by the addition to an acyl acceptor of two carbons from malonyl-ACP. Catalyzes the first condensation reaction which initiates fatty acid synthesis and may therefore play a role in governing the total rate of fatty acid production. Possesses both acetoacetyl-ACP synthase and acetyl transacylase activities. Its substrate specificity determines the biosynthesis of branched-chain and/or straight-chain of fatty acids. This Laribacter hongkongensis (strain HLHK9) protein is Beta-ketoacyl-[acyl-carrier-protein] synthase III.